A 261-amino-acid polypeptide reads, in one-letter code: MTHQTHAYHMVNPSPWPLTGALSALLMTSGLIMWFHFNSTTLLMLGLTTNMLTMYQWWRDVIRESTFQGHHTPNVQKGLRYGMILFIISEVLFFTGFFWAFYHSSLAPTPELGGCWPPTGIHPLNPLEVPLLNTSVLLASGVSITWAHHSLMEGNRNHMLQALFITIALGVYFTLLQASEYYEAPFTISDGVYGSTFFVATGFHGLHVIIGSTFLIVCFFRQLKFHFTSNHHFGFEAAAWYWHFVDVVWLFLYVSIYWWGS.

At 1 to 15 (MTHQTHAYHMVNPSP) the chain is on the mitochondrial matrix side. The chain crosses the membrane as a helical span at residues 16–34 (WPLTGALSALLMTSGLIMW). Residues 35-40 (FHFNST) are Mitochondrial intermembrane-facing. The chain crosses the membrane as a helical span at residues 41-66 (TLLMLGLTTNMLTMYQWWRDVIREST). At 67 to 72 (FQGHHT) the chain is on the mitochondrial matrix side. A helical membrane pass occupies residues 73-105 (PNVQKGLRYGMILFIISEVLFFTGFFWAFYHSS). Topologically, residues 106 to 128 (LAPTPELGGCWPPTGIHPLNPLE) are mitochondrial intermembrane. Residues 129 to 152 (VPLLNTSVLLASGVSITWAHHSLM) traverse the membrane as a helical segment. The Mitochondrial matrix portion of the chain corresponds to 153 to 155 (EGN). Residues 156-183 (RNHMLQALFITIALGVYFTLLQASEYYE) traverse the membrane as a helical segment. Over 184–190 (APFTISD) the chain is Mitochondrial intermembrane. A helical transmembrane segment spans residues 191 to 223 (GVYGSTFFVATGFHGLHVIIGSTFLIVCFFRQL). Residues 224-232 (KFHFTSNHH) lie on the Mitochondrial matrix side of the membrane. The chain crosses the membrane as a helical span at residues 233-256 (FGFEAAAWYWHFVDVVWLFLYVSI). Residues 257-261 (YWWGS) lie on the Mitochondrial intermembrane side of the membrane.

Belongs to the cytochrome c oxidase subunit 3 family. In terms of assembly, component of the cytochrome c oxidase (complex IV, CIV), a multisubunit enzyme composed of 14 subunits. The complex is composed of a catalytic core of 3 subunits MT-CO1, MT-CO2 and MT-CO3, encoded in the mitochondrial DNA, and 11 supernumerary subunits COX4I, COX5A, COX5B, COX6A, COX6B, COX6C, COX7A, COX7B, COX7C, COX8 and NDUFA4, which are encoded in the nuclear genome. The complex exists as a monomer or a dimer and forms supercomplexes (SCs) in the inner mitochondrial membrane with NADH-ubiquinone oxidoreductase (complex I, CI) and ubiquinol-cytochrome c oxidoreductase (cytochrome b-c1 complex, complex III, CIII), resulting in different assemblies (supercomplex SCI(1)III(2)IV(1) and megacomplex MCI(2)III(2)IV(2)).

The protein localises to the mitochondrion inner membrane. The enzyme catalyses 4 Fe(II)-[cytochrome c] + O2 + 8 H(+)(in) = 4 Fe(III)-[cytochrome c] + 2 H2O + 4 H(+)(out). Component of the cytochrome c oxidase, the last enzyme in the mitochondrial electron transport chain which drives oxidative phosphorylation. The respiratory chain contains 3 multisubunit complexes succinate dehydrogenase (complex II, CII), ubiquinol-cytochrome c oxidoreductase (cytochrome b-c1 complex, complex III, CIII) and cytochrome c oxidase (complex IV, CIV), that cooperate to transfer electrons derived from NADH and succinate to molecular oxygen, creating an electrochemical gradient over the inner membrane that drives transmembrane transport and the ATP synthase. Cytochrome c oxidase is the component of the respiratory chain that catalyzes the reduction of oxygen to water. Electrons originating from reduced cytochrome c in the intermembrane space (IMS) are transferred via the dinuclear copper A center (CU(A)) of subunit 2 and heme A of subunit 1 to the active site in subunit 1, a binuclear center (BNC) formed by heme A3 and copper B (CU(B)). The BNC reduces molecular oxygen to 2 water molecules using 4 electrons from cytochrome c in the IMS and 4 protons from the mitochondrial matrix. In Antilope cervicapra (Blackbuck), this protein is Cytochrome c oxidase subunit 3 (MT-CO3).